We begin with the raw amino-acid sequence, 233 residues long: MMPRLQQHKIILRQLGLQPYAPVSQAMHNFTEFRTDTTPDEIWLVEHQHVFTQGQAGKTEHVLMPGDIPVIQSDRGGQVTYHGPGQQVMYVMVDLKRAKIGVRQLVTAIENTVIETLAHFNIDSHARPDAPGVYVEQQKICSLGLRIRRGCSFHGLALNIAMDLEPFQRINPCGYAGMQMTQVSALQPGVTVADVQPVLVREFTRQLGYPTAKLQPWSLSDYLLSSHSSSSVL.

A BPL/LPL catalytic domain is found at 36 to 211; that stretch reads DTTPDEIWLV…EFTRQLGYPT (176 aa). Residues 75–82, 142–144, and 155–157 contribute to the substrate site; these read RGGQVTYH, SLG, and GLA. Cysteine 173 (acyl-thioester intermediate) is an active-site residue.

The protein belongs to the LipB family.

The protein resides in the cytoplasm. It catalyses the reaction octanoyl-[ACP] + L-lysyl-[protein] = N(6)-octanoyl-L-lysyl-[protein] + holo-[ACP] + H(+). The protein operates within protein modification; protein lipoylation via endogenous pathway; protein N(6)-(lipoyl)lysine from octanoyl-[acyl-carrier-protein]: step 1/2. Its function is as follows. Catalyzes the transfer of endogenously produced octanoic acid from octanoyl-acyl-carrier-protein onto the lipoyl domains of lipoate-dependent enzymes. Lipoyl-ACP can also act as a substrate although octanoyl-ACP is likely to be the physiological substrate. The polypeptide is Octanoyltransferase (Yersinia pseudotuberculosis serotype O:3 (strain YPIII)).